The chain runs to 1335 residues: Regulatory-associated protein of mTOR (1335 aa).

2 positions are modified to phosphoserine: serine 44 and serine 122. Serine 696 carries the phosphoserine; by MAPK8 modification. Residue threonine 700 is glycosylated (O-linked (GlcNAc) threonine). Phosphothreonine; by MAPK8 is present on threonine 706. A phosphoserine; by RPS6KA1 mark is found at serine 719 and serine 721. Residue serine 722 is modified to Phosphoserine; by AMPK and RPS6KA1. Serine 738 carries the phosphoserine modification. Positions 749-771 (GSSVAFSPGNLSTSSSASSTLGS) are disordered. Residues 755–771 (SPGNLSTSSSASSTLGS) show a composition bias toward low complexity. The residue at position 791 (serine 791) is a Phosphoserine. Serine 792 carries the post-translational modification Phosphoserine; by AMPK. Serine 836 and serine 855 each carry phosphoserine. The segment covering 853–866 (TSSLTQSAPASPTN) has biased composition (polar residues). Residues 853–942 (TSSLTQSAPA…GPDQTTDDAD (90 aa)) form a disordered region. At serine 859 the chain carries Phosphoserine; by MTOR. A Phosphoserine; by MAPK8, MTOR and NLK modification is found at serine 863. Threonine 865 carries the post-translational modification Phosphothreonine. Phosphoserine is present on serine 877. Residues 877–887 (SPPASSTSSCS) show a composition bias toward low complexity. Polar residues predominate over residues 888–898 (LTNDVAKQTVS). Residues lysine 932 and lysine 948 each participate in a glycyl lysine isopeptide (Lys-Gly) (interchain with G-Cter in ubiquitin) cross-link. Serine 982 carries the post-translational modification Phosphoserine. 7 WD repeats span residues 1020–1061 (NRNP…DYFH), 1065–1106 (PRYT…EKNP), 1121–1160 (TTRG…KVQD), 1164–1203 (GADS…SECR), 1209–1249 (EHTA…SVNV), 1251–1291 (QIVK…NNIK), and 1299–1335 (QRVG…KRVR). Lysine 1097 carries the post-translational modification N6-acetyllysine.

This sequence belongs to the WD repeat RAPTOR family. In terms of assembly, part of the mechanistic target of rapamycin complex 1 (mTORC1) which contains MTOR, MLST8 and RPTOR. mTORC1 associates with AKT1S1/PRAS40, which inhibits its activity. mTORC1 associates with DEPTOR, which regulates its activity. mTORC1 binds to and is inhibited by FKBP12-rapamycin. Forms a complex with MTOR under both leucine-rich and -poor conditions. Interacts with (via TOS motifs) EIF4EBP1 and RPS6KB1; interaction is independent of its association with MTOR. Binds preferentially to poorly or non-phosphorylated forms of EIF4EBP1, and this binding is critical to the ability of MTOR to catalyze phosphorylation. Interacts with ULK1 in a nutrient-dependent manner; the interaction is reduced during starvation. Interacts with GTP-bound form of RagA/RRAGA or RagB/RRAGB and GDP-bound form of RagC/RRAGC or RagD/RRAGD, promoting recruitment of mTORC1 to the lysosomes. Interacts (when phosphorylated by AMPK) with 14-3-3 protein, leading to inhibition of its activity. Interacts with SPAG5; SPAG5 competes with MTOR for RPTOR-binding, resulting in decreased mTORC1 formation. Interacts with WAC; WAC positively regulates MTOR activity by promoting the assembly of the TTT complex composed of TELO2, TTI1 and TTI2 and the RUVBL complex composed of RUVBL1 and RUVBL2 into the TTT-RUVBL complex which leads to the dimerization of the mTORC1 complex and its subsequent activation. Interacts with G3BP1. The complex formed with G3BP1 and SPAG5 is increased by oxidative stress. Interacts with HTR6. Interacts with PIH1D1. Interacts with LARP1. Interacts with BRAT1. Interacts with SIK3. Interacts with SLC38A7; this interaction mediates the recruitment of mTORC1 to the lysosome and its subsequent activation. Post-translationally, insulin-stimulated phosphorylation at Ser-863 by MTOR and MAPK8 regulates mTORC1 activity. Phosphorylated at Ser-863 by NLK in response to stress, disrupting the interaction with small GTPases Rag (RagA/RRAGA, RagB/RRAGB, RagC/RRAGC and/or RagD/RRAGD), thereby preventing lysosome recruitment and activation of the mTORC1 complex. Osmotic stress also induces phosphorylation at Ser-696, Thr-706 and Ser-863 by MAPK8. Ser-863 phosphorylation is required for phosphorylation at Ser-855 and Ser-859. In response to nutrient limitation, phosphorylated at Ser-722 and Ser-792 by AMPK; phosphorylation promotes interaction with 14-3-3 proteins, leading to negative regulation of the mTORC1 complex. Phosphorylation at Ser-722 and Ser-792 by AMPK in response to glucose starvation inhibits O-GlcNAcylation by OGT and subsequent activation of mTORC1. In response to growth factors, phosphorylated at Ser-719, Ser-721 and Ser-722 by RPS6KA1, which stimulates mTORC1 activity. Phosphorylation at Ser-791 by PKA downstream of cAMP inhibits the mTORC1 complex. Phosphorylated at Ser-877 by TBK1, leading to negative regulation of the mTORC1 complex. O-GlcNAcylated by OGT upon glucose sufficiency, promoting interaction with small GTPases Rag (RagA/RRAGA, RagB/RRAGB, RagC/RRAGC and/or RagD/RRAGD) and subsequent recruitment of mTORC1 to lysosomal membranes, leading to activation of the mTORC1 complex. Phosphorylation at Ser-722 and Ser-792 by AMPK in response to glucose starvation inhibits O-GlcNAcylation. In terms of processing, acetylation at Lys-1097 by EP300/p300 in response to leucine metabolite acetyl-coA promotes its activity, leading to activation of the mTORC1 complex. Acetylation is decreased in response to fasting. Phosphorylated at Ser-877 by TBK1, leading to negative regulation of the mTORC1 complex. Post-translationally, ubiquitinated, leading to its degradation by the proteasome. Deubiquitinated by OTUB1 via a non-catalytic mechanism. Ubiquitinated by an E3 ubiquitin ligase complex containing VHL.

The protein resides in the cytoplasm. It localises to the lysosome. The protein localises to the cytoplasmic granule. Functionally, component of the mechanistic target of rapamycin complex 1 (mTORC1), an evolutionarily conserved central nutrient sensor that stimulates anabolic reactions and macromolecule biosynthesis to promote cellular biomass generation and growth. In response to nutrients, growth factors or amino acids, mTORC1 is recruited to the lysosome membrane and promotes protein, lipid and nucleotide synthesis by phosphorylating several substrates, such as ribosomal protein S6 kinase (RPS6KB1 and RPS6KB2) and EIF4EBP1 (4E-BP1). In the same time, it inhibits catabolic pathways by phosphorylating the autophagy initiation components ULK1 and ATG13, as well as transcription factor TFEB, a master regulators of lysosomal biogenesis and autophagy. The mTORC1 complex is inhibited in response to starvation and amino acid depletion. Within the mTORC1 complex, RPTOR acts both as a molecular adapter, which (1) mediates recruitment of mTORC1 to lysosomal membranes via interaction with small GTPases Rag (RagA/RRAGA, RagB/RRAGB, RagC/RRAGC and/or RagD/RRAGD), and a (2) substrate-specific adapter, which promotes substrate specificity by binding to TOS motif-containing proteins and direct them towards the active site of the MTOR kinase domain for phosphorylation. mTORC1 complex regulates many cellular processes, such as odontoblast and osteoclast differentiation or neuronal transmission. mTORC1 complex in excitatory neuronal transmission is required for the prosocial behavior induced by the psychoactive substance lysergic acid diethylamide (LSD). This is Regulatory-associated protein of mTOR from Mus musculus (Mouse).